A 239-amino-acid polypeptide reads, in one-letter code: ATP-dependent dethiobiotin synthetase BioD (239 aa).

15–20 lines the ATP pocket; the sequence is EIGKTF. Thr19 contacts Mg(2+). Lys40 is an active-site residue. ATP-binding positions include Asp57, 118-121, 178-179, and 211-213; these read EGVG, NH, and AHL. The Mg(2+) site is built by Asp57 and Glu118.

Belongs to the dethiobiotin synthetase family. In terms of assembly, homodimer. Requires Mg(2+) as cofactor.

It localises to the cytoplasm. The catalysed reaction is (7R,8S)-7,8-diammoniononanoate + CO2 + ATP = (4R,5S)-dethiobiotin + ADP + phosphate + 3 H(+). The protein operates within cofactor biosynthesis; biotin biosynthesis; biotin from 7,8-diaminononanoate: step 1/2. Its function is as follows. Catalyzes a mechanistically unusual reaction, the ATP-dependent insertion of CO2 between the N7 and N8 nitrogen atoms of 7,8-diaminopelargonic acid (DAPA, also called 7,8-diammoniononanoate) to form a ureido ring. The chain is ATP-dependent dethiobiotin synthetase BioD from Burkholderia vietnamiensis (strain G4 / LMG 22486) (Burkholderia cepacia (strain R1808)).